Here is a 288-residue protein sequence, read N- to C-terminus: 3'-5' exonuclease (288 aa).

The disordered stretch occupies residues 30–67 (RSSSSSSSAAPTVQATTSVHGHEEDPNQIPNNIRRQLP). Composition is skewed to polar residues over residues 38 to 48 (AAPTVQATTSV) and 57 to 67 (QIPNNIRRQLP). The 3'-5' exonuclease domain occupies 129–279 (FVGLDIEWRP…ASWHLYKVLK (151 aa)).

As to quaternary structure, interacts with KU70 and KU80. Interacts with RECQL2. Requires Mg(2+) as cofactor. It depends on Mn(2+) as a cofactor. As to expression, expressed ubiquitously.

Its subcellular location is the nucleus. Its activity is regulated as follows. Activated upon interaction with the KU heterodimer. Not stimulated by ATP. Functionally, exonuclease that digests recessed strands of DNA duplexes in the 3' to 5' direction but hardly single-stranded DNA or blunt-ended duplexes. Also able to digest 3'-protruding strands and 3'-recessed strand termini of duplexes containing mismatched bases. In Arabidopsis thaliana (Mouse-ear cress), this protein is 3'-5' exonuclease (WEX).